Here is a 158-residue protein sequence, read N- to C-terminus: SsrA-binding protein (158 aa).

The tract at residues 131–158 is disordered; the sequence is GKKTHDKRETEKKRDWNREKARLLRDRG. Over residues 136-158 the composition is skewed to basic and acidic residues; sequence DKRETEKKRDWNREKARLLRDRG.

This sequence belongs to the SmpB family.

It is found in the cytoplasm. In terms of biological role, required for rescue of stalled ribosomes mediated by trans-translation. Binds to transfer-messenger RNA (tmRNA), required for stable association of tmRNA with ribosomes. tmRNA and SmpB together mimic tRNA shape, replacing the anticodon stem-loop with SmpB. tmRNA is encoded by the ssrA gene; the 2 termini fold to resemble tRNA(Ala) and it encodes a 'tag peptide', a short internal open reading frame. During trans-translation Ala-aminoacylated tmRNA acts like a tRNA, entering the A-site of stalled ribosomes, displacing the stalled mRNA. The ribosome then switches to translate the ORF on the tmRNA; the nascent peptide is terminated with the 'tag peptide' encoded by the tmRNA and targeted for degradation. The ribosome is freed to recommence translation, which seems to be the essential function of trans-translation. In Brucella ovis (strain ATCC 25840 / 63/290 / NCTC 10512), this protein is SsrA-binding protein.